A 530-amino-acid polypeptide reads, in one-letter code: Vesicular acetylcholine transporter (530 aa).

Residues 1-33 (MEPTAPTGQARAAATKLSEAVGAALQEPQRQRR) are Cytoplasmic-facing. The helical transmembrane segment at 34–54 (LVLVIVCVALLLDNMLYMVIV) threads the bilayer. Topologically, residues 55 to 125 (PIVPDYIAHM…PTESEDVKIG (71 aa)) are lumenal, vesicle. Asparagine 89 and asparagine 96 each carry an N-linked (GlcNAc...) asparagine glycan. Residues 126 to 146 (VLFASKAILQLLVNPLSGPFI) traverse the membrane as a helical segment. Residues 147 to 152 (DRMSYD) are Cytoplasmic-facing. The chain crosses the membrane as a helical span at residues 153–173 (VPLLIGLGVMFASTVMFAFAE). Over 174–182 (DYATLFAAR) the chain is Lumenal, vesicle. A helical transmembrane segment spans residues 183–203 (SLQGLGSAFADTSGIAMIADK). Residues 204–213 (YPEEPERSRA) are Cytoplasmic-facing. The chain crosses the membrane as a helical span at residues 214–234 (LGVALAFISFGSLVAPPFGGI). Over 235 to 242 (LYEFAGKR) the chain is Lumenal, vesicle. A helical membrane pass occupies residues 243–263 (VPFLVLAAVSLFDALLLLAVA). The Cytoplasmic segment spans residues 264–289 (KPFSAAARARANLPVGTPIHRLMLDP). Residues 290 to 310 (YIAVVAGALTTCNIPLAFLEP) traverse the membrane as a helical segment. The Lumenal, vesicle portion of the chain corresponds to 311 to 325 (TIATWMKHTMAASEW). Residues 326-346 (EMGMVWLPAFVPHVLGVYLTV) form a helical membrane-spanning segment. The Cytoplasmic segment spans residues 347–356 (RLAARYPHLQ). The chain crosses the membrane as a helical span at residues 357–377 (WLYGALGLAVIGVSSCVVPAC). Residues 378-388 (RSFAPLVVSLC) are Lumenal, vesicle-facing. A helical transmembrane segment spans residues 389 to 409 (GLCFGIALVDTALLPTLAFLV). Residues 410–422 (DVRHVSVYGSVYA) are Cytoplasmic-facing. The helical transmembrane segment at 423–443 (IADISYSVAYALGPIVAGHIV) threads the bilayer. The Lumenal, vesicle portion of the chain corresponds to 444–447 (HSLG). The chain crosses the membrane as a helical span at residues 448–468 (FEQLSLGMGLANLLYAPVLLL). Residues 469–530 (LRNVGLLTRS…EDDYNYYSRS (62 aa)) are Cytoplasmic-facing. Positions 471–530 (NVGLLTRSRSERDVLLDEPPQGLYDAVRLREVQGKDGGEPCSPPGPFDGCEDDYNYYSRS) are mediates interaction with SEC14L1. The segment at 504–530 (GKDGGEPCSPPGPFDGCEDDYNYYSRS) is disordered.

It belongs to the major facilitator superfamily. Vesicular transporter family. Interacts with SEC14L1. In terms of tissue distribution, high expression in all major cholinergic cell groups, including peripheral postganglionic parasympathetic cells, preganglionic sympathetic and parasympathetic cells, ventral spinal cord and brainstem motoneurons, cell groups in the basal forebrain, the habenula and the corpus striatum. Weakly expressed in the cortex and hippocampus.

It is found in the cytoplasmic vesicle. The protein localises to the secretory vesicle. The protein resides in the synaptic vesicle membrane. It carries out the reaction acetylcholine(out) + 2 H(+)(in) = acetylcholine(in) + 2 H(+)(out). The enzyme catalyses choline(in) + 2 H(+)(out) = choline(out) + 2 H(+)(in). It catalyses the reaction serotonin(in) + 2 H(+)(out) = serotonin(out) + 2 H(+)(in). Its activity is regulated as follows. Potently inhibited by L-vesamicol. In terms of biological role, electrogenic antiporter that exchanges one cholinergic neurotransmitter, acetylcholine or choline, with two intravesicular protons across the membrane of synaptic vesicles. Uses the electrochemical proton gradient established by the V-type proton-pump ATPase to store neurotransmitters inside the vesicles prior to their release via exocytosis. Determines cholinergic vesicular quantal size at presynaptic nerve terminals in developing neuro-muscular junctions with an impact on motor neuron differentiation and innervation pattern. Part of forebrain cholinergic system, regulates hippocampal synapse transmissions that underlie spatial memory formation. Can transport serotonin. This chain is Vesicular acetylcholine transporter (Slc18a3), found in Rattus norvegicus (Rat).